A 426-amino-acid chain; its full sequence is Glutamyl-tRNA reductase (426 aa).

Substrate-binding positions include 49–52 (TCNR), serine 109, 114–116 (EGQ), and glutamine 120. Cysteine 50 acts as the Nucleophile in catalysis. Residue 189 to 194 (GAGETG) coordinates NADP(+).

It belongs to the glutamyl-tRNA reductase family. As to quaternary structure, homodimer.

It carries out the reaction (S)-4-amino-5-oxopentanoate + tRNA(Glu) + NADP(+) = L-glutamyl-tRNA(Glu) + NADPH + H(+). It participates in porphyrin-containing compound metabolism; protoporphyrin-IX biosynthesis; 5-aminolevulinate from L-glutamyl-tRNA(Glu): step 1/2. The protein operates within porphyrin-containing compound metabolism; chlorophyll biosynthesis. In terms of biological role, catalyzes the NADPH-dependent reduction of glutamyl-tRNA(Glu) to glutamate 1-semialdehyde (GSA). In Chlorobium chlorochromatii (strain CaD3), this protein is Glutamyl-tRNA reductase.